Here is a 171-residue protein sequence, read N- to C-terminus: Methylated-DNA--protein-cysteine methyltransferase (171 aa).

The active-site Nucleophile; methyl group acceptor is the Cys139.

It belongs to the MGMT family.

It localises to the cytoplasm. It carries out the reaction a 6-O-methyl-2'-deoxyguanosine in DNA + L-cysteinyl-[protein] = S-methyl-L-cysteinyl-[protein] + a 2'-deoxyguanosine in DNA. It catalyses the reaction a 4-O-methyl-thymidine in DNA + L-cysteinyl-[protein] = a thymidine in DNA + S-methyl-L-cysteinyl-[protein]. Functionally, involved in the cellular defense against the biological effects of O6-methylguanine (O6-MeG) and O4-methylthymine (O4-MeT) in DNA. Repairs the methylated nucleobase in DNA by stoichiometrically transferring the methyl group to a cysteine residue in the enzyme. This is a suicide reaction: the enzyme is irreversibly inactivated. This chain is Methylated-DNA--protein-cysteine methyltransferase, found in Shigella flexneri.